The primary structure comprises 73 residues: Translation initiation factor IF-1 (73 aa).

In terms of domain architecture, S1-like spans 1–73; that stretch reads MAKKDGVIEI…TRGRIVYRYK (73 aa).

Belongs to the IF-1 family. As to quaternary structure, component of the 30S ribosomal translation pre-initiation complex which assembles on the 30S ribosome in the order IF-2 and IF-3, IF-1 and N-formylmethionyl-tRNA(fMet); mRNA recruitment can occur at any time during PIC assembly.

Its subcellular location is the cytoplasm. In terms of biological role, one of the essential components for the initiation of protein synthesis. Stabilizes the binding of IF-2 and IF-3 on the 30S subunit to which N-formylmethionyl-tRNA(fMet) subsequently binds. Helps modulate mRNA selection, yielding the 30S pre-initiation complex (PIC). Upon addition of the 50S ribosomal subunit IF-1, IF-2 and IF-3 are released leaving the mature 70S translation initiation complex. This is Translation initiation factor IF-1 from Clavibacter michiganensis subsp. michiganensis (strain NCPPB 382).